Reading from the N-terminus, the 525-residue chain is NAD(P)H-quinone oxidoreductase subunit 2 (525 aa).

The next 14 membrane-spanning stretches (helical) occupy residues 14–34 (AIWP…VDLV), 42–62 (SLPA…VLQW), 78–98 (PVSI…VMMA), 117–137 (LTAT…MVFV), 167–187 (LLTG…LYGL), 201–221 (LANA…GIGF), 240–260 (PTPV…ALAI), 276–296 (AVLS…AIAQ), 302–322 (LLAY…VAGT), 330–350 (IFYL…VTLF), 374–394 (LCLS…GFFG), 396–416 (LYLF…VGLV), 462–482 (VGMV…NPLF), and 494–514 (FLGF…SLAV).

Belongs to the complex I subunit 2 family. As to quaternary structure, NDH-1 can be composed of about 15 different subunits; different subcomplexes with different compositions have been identified which probably have different functions.

The protein resides in the cellular thylakoid membrane. It catalyses the reaction a plastoquinone + NADH + (n+1) H(+)(in) = a plastoquinol + NAD(+) + n H(+)(out). The catalysed reaction is a plastoquinone + NADPH + (n+1) H(+)(in) = a plastoquinol + NADP(+) + n H(+)(out). NDH-1 shuttles electrons from an unknown electron donor, via FMN and iron-sulfur (Fe-S) centers, to quinones in the respiratory and/or the photosynthetic chain. The immediate electron acceptor for the enzyme in this species is believed to be plastoquinone. Couples the redox reaction to proton translocation, and thus conserves the redox energy in a proton gradient. Cyanobacterial NDH-1 also plays a role in inorganic carbon-concentration. The protein is NAD(P)H-quinone oxidoreductase subunit 2 of Synechococcus sp. (strain JA-3-3Ab) (Cyanobacteria bacterium Yellowstone A-Prime).